The following is a 190-amino-acid chain: Lipid A acyltransferase PagP (190 aa).

The N-terminal stretch at 1 to 29 (MYVAMIIRKYFLIIALLLMPWLAIPSVSA) is a signal peptide. Active-site residues include His-62, Asp-105, and Ser-106.

The protein belongs to the lipid A palmitoyltransferase family. Homodimer.

The protein resides in the cell outer membrane. The catalysed reaction is a lipid A + a 1,2-diacyl-sn-glycero-3-phosphocholine = a hepta-acyl lipid A + a 2-acyl-sn-glycero-3-phosphocholine. The enzyme catalyses a lipid IVA + a 1,2-diacyl-sn-glycero-3-phosphocholine = a lipid IVB + a 2-acyl-sn-glycero-3-phosphocholine. It catalyses the reaction a lipid IIA + a 1,2-diacyl-sn-glycero-3-phosphocholine = a lipid IIB + a 2-acyl-sn-glycero-3-phosphocholine. Functionally, transfers a fatty acid residue from the sn-1 position of a phospholipid to the N-linked hydroxyfatty acid chain on the proximal unit of lipid A or its precursors. Required for resistance to cationic antimicrobial peptides (CAMPs). Modifications of lipid A with an acyl chain allow to evade host immune defenses by resisting antimicrobial peptides and attenuating the inflammatory response to infection triggered by lipopolysaccharide through the Toll-like receptor 4 (TLR4) signal transduction pathway. This is Lipid A acyltransferase PagP from Salmonella typhimurium (strain LT2 / SGSC1412 / ATCC 700720).